The following is a 424-amino-acid chain: Glycerol-3-phosphate dehydrogenase [NAD(+)] (424 aa).

Residues G79 to G84, F111, and F167 each bind NAD(+). K190 contributes to the substrate binding site. A223 contributes to the NAD(+) binding site. K283 serves as the catalytic Proton acceptor. NAD(+)-binding residues include R348 and Q377. Residue R348 to N349 coordinates substrate.

It belongs to the NAD-dependent glycerol-3-phosphate dehydrogenase family.

It catalyses the reaction sn-glycerol 3-phosphate + NAD(+) = dihydroxyacetone phosphate + NADH + H(+). The sequence is that of Glycerol-3-phosphate dehydrogenase [NAD(+)] (GPD) from Eremothecium gossypii (strain ATCC 10895 / CBS 109.51 / FGSC 9923 / NRRL Y-1056) (Yeast).